A 59-amino-acid chain; its full sequence is Ribosome biogenesis protein Nop10 (59 aa).

The protein belongs to the NOP10 family.

Its function is as follows. Involved in ribosome biogenesis; more specifically in 18S rRNA pseudouridylation and in cleavage of pre-rRNA. In Thermococcus gammatolerans (strain DSM 15229 / JCM 11827 / EJ3), this protein is Ribosome biogenesis protein Nop10.